A 133-amino-acid chain; its full sequence is Profilin-2 (133 aa).

Cysteines 13 and 117 form a disulfide. The Involved in PIP2 interaction signature appears at 83 to 99 (AVIRGKKGSGGITIKKT). Position 113 is a phosphothreonine (T113).

It belongs to the profilin family. In terms of assembly, occurs in many kinds of cells as a complex with monomeric actin in a 1:1 ratio. In terms of processing, phosphorylated by MAP kinases.

The protein resides in the cytoplasm. It is found in the cytoskeleton. Binds to actin and affects the structure of the cytoskeleton. At high concentrations, profilin prevents the polymerization of actin, whereas it enhances it at low concentrations. The polypeptide is Profilin-2 (Corylus avellana (European hazel)).